A 491-amino-acid chain; its full sequence is Cytochrome P450 2C40 (491 aa).

The N-terminal stretch at 1–25 (MDPFVVLVLCLSFLLVLSLWRQRSA) is a signal peptide. Cys435 serves as a coordination point for heme.

The protein belongs to the cytochrome P450 family. It depends on heme as a cofactor. In terms of tissue distribution, liver, brain, kidney, and intestine, with trace amounts in lung and heart. Expressed throughout the intestinal tract, with higher expression levels in jejunum, cecum and colon.

It is found in the endoplasmic reticulum membrane. The protein localises to the microsome membrane. It catalyses the reaction (5Z,8Z,11Z,14Z)-eicosatetraenoate + reduced [NADPH--hemoprotein reductase] + O2 = 16(R)-hydroxy-(5Z,8Z,11Z,14Z)-eicosatetraenoate + oxidized [NADPH--hemoprotein reductase] + H2O + H(+). The catalysed reaction is (5Z,8Z,11Z,14Z)-eicosatetraenoate + reduced [NADPH--hemoprotein reductase] + O2 = 16(S)-hydroxy-(5Z,8Z,11Z,14Z)-eicosatetraenoate + oxidized [NADPH--hemoprotein reductase] + H2O + H(+). It carries out the reaction (5Z,8Z,11Z,14Z)-eicosatetraenoate + reduced [NADPH--hemoprotein reductase] + O2 = (14R,15S)-epoxy-(5Z,8Z,11Z)-eicosatrienoate + oxidized [NADPH--hemoprotein reductase] + H2O + H(+). The enzyme catalyses (5Z,8Z,11Z,14Z)-eicosatetraenoate + reduced [NADPH--hemoprotein reductase] + O2 = (14S,15R)-epoxy-(5Z,8Z,11Z)-eicosatrienoate + oxidized [NADPH--hemoprotein reductase] + H2O + H(+). The protein operates within lipid metabolism; arachidonate metabolism. Its function is as follows. A cytochrome P450 monooxygenase that may play a major role in the metabolism of arachidonic acid in the intestinal tract. Exhibits regioselective hydroxylase and epoxidase activity toward arachidonic acid, producing 16(R)-hydroxyeicosatetraenoic acid (HETE) and (14R,15S)-epoxyeicosatrienoic acid (EpETrE) as major products. Mechanistically, uses molecular oxygen inserting one oxygen atom into a substrate, and reducing the second into a water molecule, with two electrons provided by NADPH via cytochrome P450 reductase (CPR; NADPH-ferrihemoprotein reductase). The protein is Cytochrome P450 2C40 of Mus musculus (Mouse).